The chain runs to 188 residues: uncharacterized protein (188 aa).

The chain crosses the membrane as a helical span at residues 121–139; the sequence is IWLYGGASLITTFINLGLV.

The protein to B.subtilis YwjB.

The protein localises to the membrane. This is an uncharacterized protein from Bacillus subtilis (strain 168).